The chain runs to 757 residues: uncharacterized protein (757 aa).

One can recognise an S1 motif domain in the interval 640–709; the sequence is GMILEGVVSN…ARKRIALTMR (70 aa). Basic and acidic residues predominate over residues 711-741; that stretch reads DDEPGGAKHKMPSENRSRERTAGRKPQRNDR. Positions 711 to 757 are disordered; sequence DDEPGGAKHKMPSENRSRERTAGRKPQRNDRAPANSAMADAFAKLKR.

This is an uncharacterized protein from Neisseria meningitidis serogroup B (strain ATCC BAA-335 / MC58).